The primary structure comprises 165 residues: MKTSRLPIAIQQAVMRGLREKLAQANLKLGRNYPEPKLSYTQRGTSAGTAWLESYEIRLNPVLLLENSEAFIEEVVPHELAHLLVWKHFGRVAPHGKEWKWMMESVLGVPARRTHQFELQSVRRNTFPYRCKCQEHQLTVRRHNRVVRGEAVYRCVHCGEQLVAK.

Residues 20-163 (EKLAQANLKL…RCVHCGEQLV (144 aa)) enclose the SprT-like domain. Residue His-78 coordinates Zn(2+). Glu-79 is a catalytic residue. His-82 is a binding site for Zn(2+).

This sequence belongs to the SprT family. It depends on Zn(2+) as a cofactor.

It is found in the cytoplasm. This Shigella sonnei (strain Ss046) protein is Protein SprT.